The following is a 299-amino-acid chain: 4-diphosphocytidyl-2-C-methyl-D-erythritol kinase (299 aa).

K17 is a catalytic residue. 103 to 113 serves as a coordination point for ATP; that stretch reads PVASGIGGGSG. Residue D145 is part of the active site.

It belongs to the GHMP kinase family. IspE subfamily.

The enzyme catalyses 4-CDP-2-C-methyl-D-erythritol + ATP = 4-CDP-2-C-methyl-D-erythritol 2-phosphate + ADP + H(+). The protein operates within isoprenoid biosynthesis; isopentenyl diphosphate biosynthesis via DXP pathway; isopentenyl diphosphate from 1-deoxy-D-xylulose 5-phosphate: step 3/6. Catalyzes the phosphorylation of the position 2 hydroxy group of 4-diphosphocytidyl-2C-methyl-D-erythritol. The protein is 4-diphosphocytidyl-2-C-methyl-D-erythritol kinase of Bartonella tribocorum (strain CIP 105476 / IBS 506).